Reading from the N-terminus, the 185-residue chain is Ribosome-recycling factor (185 aa).

Belongs to the RRF family.

It is found in the cytoplasm. Functionally, responsible for the release of ribosomes from messenger RNA at the termination of protein biosynthesis. May increase the efficiency of translation by recycling ribosomes from one round of translation to another. The polypeptide is Ribosome-recycling factor (Bacillus licheniformis (strain ATCC 14580 / DSM 13 / JCM 2505 / CCUG 7422 / NBRC 12200 / NCIMB 9375 / NCTC 10341 / NRRL NRS-1264 / Gibson 46)).